A 607-amino-acid polypeptide reads, in one-letter code: Pescadillo homolog (607 aa).

Residues 320–413 (KLKNLFKGLK…KLLPVNKYLI (94 aa)) form the BRCT domain. Residues 486-607 (EALNSGALEE…KTQRKEILAK (122 aa)) are disordered. Acidic residues predominate over residues 495–511 (EAPEEEDDDEEAPEEDE). Positions 530–549 (IFKENPSEQKKLTKQEEALR) are enriched in basic and acidic residues. A compositionally biased stretch (basic residues) spans 551–562 (RMVKSRHKKLYR). Residues 563–607 (KMLEKQKKQTKEANLLKEKRQQIDKKQRVEQTQKRKTQRKEILAK) show a composition bias toward basic and acidic residues.

This sequence belongs to the pescadillo family.

It localises to the nucleus. The protein localises to the nucleolus. It is found in the nucleoplasm. Its function is as follows. Required for maturation of ribosomal RNAs and formation of the large ribosomal subunit. The polypeptide is Pescadillo homolog (Culex quinquefasciatus (Southern house mosquito)).